A 219-amino-acid polypeptide reads, in one-letter code: Protein-L-isoaspartate O-methyltransferase 2 (219 aa).

Serine 60 is an active-site residue.

Belongs to the methyltransferase superfamily. L-isoaspartyl/D-aspartyl protein methyltransferase family.

It localises to the cytoplasm. The enzyme catalyses [protein]-L-isoaspartate + S-adenosyl-L-methionine = [protein]-L-isoaspartate alpha-methyl ester + S-adenosyl-L-homocysteine. In terms of biological role, catalyzes the methyl esterification of L-isoaspartyl residues in peptides and proteins that result from spontaneous decomposition of normal L-aspartyl and L-asparaginyl residues. It plays a role in the repair and/or degradation of damaged proteins. The protein is Protein-L-isoaspartate O-methyltransferase 2 (pcm2) of Archaeoglobus fulgidus (strain ATCC 49558 / DSM 4304 / JCM 9628 / NBRC 100126 / VC-16).